Consider the following 528-residue polypeptide: Protein MGF 505-7R (528 aa).

This sequence belongs to the asfivirus MGF 505 family. As to quaternary structure, interacts with host STING1. Interacts with host JAK1; this interaction leads to JAK1 degradation. Interacts with host JAK2; this interaction leads to JAK2 degradation. Interacts with host RELA; this interaction inhibits NF-kappa-B promoter activity.

It localises to the host cytoplasm. Its function is as follows. Plays a role in virus cell tropism, and may be required for efficient virus replication in macrophages. Interferes with host NF-kappa-B promoter activity mediated by TLR8. Mechanistically, inhibits the phosphorylation and subsequent nuclear translocation of host NF-kappa-B RELA subunit downstream of TLR8. Promotes the expression of the autophagy-related protein host ULK1 to degrade host STING and inhibit the interferon response. Also inhibits JAK1- and JAK2-mediated signaling and thus negatively regulates the IFN-gamma signaling. The protein is Protein MGF 505-7R of African swine fever virus (isolate Pig/Kenya/KEN-50/1950) (ASFV).